The sequence spans 921 residues: Extended synaptotagmin-2 (921 aa).

Over 1-103 (MTANRDAALS…RPGGPENPGG (103 aa)) the chain is Cytoplasmic. The tract at residues 1–103 (MTANRDAALS…RPGGPENPGG (103 aa)) is disordered. A compositionally biased stretch (basic residues) spans 58–75 (GARRRAKTARGLRGHRQR). Residues 104 to 124 (VLSVELPGLLAQLARSFALLL) form a helical membrane-spanning segment. Over 125-127 (PVY) the chain is Lumenal. A helical transmembrane segment spans residues 128 to 148 (ALGYLGLSFSWVLLALALLAW). At 149–921 (CRRSRGLKAL…EDGTRPQAMT (773 aa)) the chain is on the cytoplasmic side. The SMP-LTD domain maps to 191–370 (DTERAEWLNK…LPNRITVPLV (180 aa)). C2 domains lie at 369 to 489 (LVSE…DEWF) and 514 to 639 (NLDK…QLSN). Ca(2+)-binding residues include lysine 400, aspartate 401, aspartate 413, aspartate 460, glutamate 461, aspartate 462, aspartate 464, aspartate 466, and aspartate 467. The tract at residues 660-754 (RERPPDHQHS…GHISVKEPTP (95 aa)) is disordered. Residues serine 691 and serine 693 each carry the phosphoserine modification. Threonine 705 bears the Phosphothreonine mark. Phosphoserine is present on residues serine 736, serine 738, serine 739, serine 743, serine 748, serine 755, serine 758, and serine 761. In terms of domain architecture, C2 3 spans 786–908 (PLGQIQLTIR…ELAKGWTQWY (123 aa)). Residues 833 to 840 (KRRSGRRK) are required for phosphatidylinositol 4,5-bisphosphate-dependent location at the cell membrane.

The protein belongs to the extended synaptotagmin family. In terms of assembly, homodimer. Interacts with ESYT1 and ESYT3. Interacts with FGFR1 that has been activated by FGF1 binding. Interacts with the AP-2 complex; identified in a complex with the AP-2 complex and FGFR1. As to expression, widely expressed with high level in cerebellum.

The protein localises to the cell membrane. It localises to the endoplasmic reticulum membrane. Tethers the endoplasmic reticulum to the cell membrane and promotes the formation of appositions between the endoplasmic reticulum and the cell membrane. Binds glycerophospholipids in a barrel-like domain and may play a role in cellular lipid transport. Plays a role in FGF signaling via its role in the rapid internalization of FGFR1 that has been activated by FGF1 binding; this occurs most likely via the AP-2 complex. Promotes the localization of SACM1L at endoplasmic reticulum-plasma membrane contact sites (EPCS). The chain is Extended synaptotagmin-2 from Homo sapiens (Human).